The following is a 983-amino-acid chain: Chaperone protein ClpB3, mitochondrial (983 aa).

The transit peptide at 1-87 (MSRATAVSRL…LFHPTQAARY (87 aa)) directs the protein to the mitochondrion. The Clp R domain occupies 97 to 240 (PGEFTEMAWE…KEAISAVRGS (144 aa)). Repeat stretches follow at residues 100 to 165 (FTEM…ISRQ) and 177 to 240 (IGSS…VRGS). The segment at 255–503 (LEKYGIDMTE…KLKMEITSKP (249 aa)) is i. 300–307 (GEPGVGKT) contacts ATP. The stretch at 504 to 627 (IELDEVDREI…QQSGKSMLRE (124 aa)) forms a coiled coil. Positions 629 to 820 (VTDVDIAEIV…VIIMTSNIGS (192 aa)) are II. Residue 703–710 (GPTGVGKT) participates in ATP binding.

Belongs to the ClpA/ClpB family.

Its subcellular location is the mitochondrion. Functionally, molecular chaperone that may not be involved in heat stress response or tolerance. The chain is Chaperone protein ClpB3, mitochondrial (CLPB3) from Oryza sativa subsp. japonica (Rice).